Here is a 411-residue protein sequence, read N- to C-terminus: Multifunctional CCA protein (411 aa).

2 residues coordinate ATP: Gly8 and Arg11. CTP is bound by residues Gly8 and Arg11. Glu21 and Asp23 together coordinate Mg(2+). The ATP site is built by Arg91, Arg137, and Arg140. CTP contacts are provided by Arg91, Arg137, and Arg140. Positions 228–329 (TGVHALLALE…LKTLLALDGL (102 aa)) constitute an HD domain.

It belongs to the tRNA nucleotidyltransferase/poly(A) polymerase family. Bacterial CCA-adding enzyme type 1 subfamily. As to quaternary structure, monomer. Can also form homodimers and oligomers. Mg(2+) is required as a cofactor. Requires Ni(2+) as cofactor.

It catalyses the reaction a tRNA precursor + 2 CTP + ATP = a tRNA with a 3' CCA end + 3 diphosphate. It carries out the reaction a tRNA with a 3' CCA end + 2 CTP + ATP = a tRNA with a 3' CCACCA end + 3 diphosphate. Catalyzes the addition and repair of the essential 3'-terminal CCA sequence in tRNAs without using a nucleic acid template. Adds these three nucleotides in the order of C, C, and A to the tRNA nucleotide-73, using CTP and ATP as substrates and producing inorganic pyrophosphate. tRNA 3'-terminal CCA addition is required both for tRNA processing and repair. Also involved in tRNA surveillance by mediating tandem CCA addition to generate a CCACCA at the 3' terminus of unstable tRNAs. While stable tRNAs receive only 3'-terminal CCA, unstable tRNAs are marked with CCACCA and rapidly degraded. The protein is Multifunctional CCA protein of Teredinibacter turnerae (strain ATCC 39867 / T7901).